The sequence spans 129 residues: 3-aminoacrylate deaminase RutC (129 aa).

The protein belongs to the RutC family.

The catalysed reaction is (Z)-3-aminoacrylate + H2O + H(+) = 3-oxopropanoate + NH4(+). In terms of biological role, involved in pyrimidine catabolism. Catalyzes the deamination of 3-aminoacrylate to malonic semialdehyde, a reaction that can also occur spontaneously. RutC may facilitate the reaction and modulate the metabolic fitness, rather than catalyzing essential functions. In Caulobacter sp. (strain K31), this protein is 3-aminoacrylate deaminase RutC.